Reading from the N-terminus, the 289-residue chain is Diaminopimelate epimerase (289 aa).

Substrate contacts are provided by N13, Q47, and N67. C76 serves as the catalytic Proton donor. Residues 77–78 (GN), N167, N200, and 218–219 (ER) contribute to the substrate site. C227 (proton acceptor) is an active-site residue. 228 to 229 (GT) is a substrate binding site.

This sequence belongs to the diaminopimelate epimerase family. Homodimer.

The protein resides in the cytoplasm. It catalyses the reaction (2S,6S)-2,6-diaminopimelate = meso-2,6-diaminopimelate. Its pathway is amino-acid biosynthesis; L-lysine biosynthesis via DAP pathway; DL-2,6-diaminopimelate from LL-2,6-diaminopimelate: step 1/1. Catalyzes the stereoinversion of LL-2,6-diaminopimelate (L,L-DAP) to meso-diaminopimelate (meso-DAP), a precursor of L-lysine and an essential component of the bacterial peptidoglycan. The protein is Diaminopimelate epimerase of Burkholderia pseudomallei (strain K96243).